An 800-amino-acid chain; its full sequence is DNA mismatch repair protein MutS (800 aa).

An ATP-binding site is contributed by glycine 616 to serine 623.

Belongs to the DNA mismatch repair MutS family.

Its function is as follows. This protein is involved in the repair of mismatches in DNA. It is possible that it carries out the mismatch recognition step. This protein has a weak ATPase activity. The chain is DNA mismatch repair protein MutS from Buchnera aphidicola subsp. Baizongia pistaciae (strain Bp).